The chain runs to 96 residues: Small ribosomal subunit protein bS6 (96 aa).

It belongs to the bacterial ribosomal protein bS6 family.

Binds together with bS18 to 16S ribosomal RNA. The chain is Small ribosomal subunit protein bS6 from Nocardioides sp. (strain ATCC BAA-499 / JS614).